We begin with the raw amino-acid sequence, 427 residues long: MKTLIKNGKIIKKENQLIEAALWLENGVIHAIGESFDEADFEQVFDANGQLITPGLVDVHVHFREPGFTYKETIKTGSKAAARGGFTTVCAMPNLNPVPDTAEKLSEVYDLIQKDAVVKVLQYAPITEELRSEVLTNQKALKEAGAFAFTNDGVGVQTAGTMYLAMKEAAALNMALVAHTEDESLLFGGVMHEGEVSKKLGLPGILSATEASQIARDITLAKETGVHYHVCHVSTEESVRVIRDAKKAGIHVTAEVSPHHLILVDEDIPGDEGFWKMNPPLRGLADRQALIDGLLDGTIDCIATDHAPHGLEEKQQSFLNAPFGIVGSETAFQLIYTNFVETGIFTLEQVIDWMAVKPAEIFGLNAGTLTIGAPADIAVFDLATAAPIDAEAFESMAVNTPFTGWTVKGKTLMTFVDGALAWSEEAQ.

Residues H60 and H62 each coordinate Zn(2+). Residues 62–64 (HFR) and N94 each bind substrate. Zn(2+)-binding residues include D152, H179, and H232. Position 278 (N278) interacts with substrate. D305 serves as a coordination point for Zn(2+). D305 is a catalytic residue. Substrate contacts are provided by residues H309 and 323–324 (FG).

It belongs to the metallo-dependent hydrolases superfamily. DHOase family. Class I DHOase subfamily. Requires Zn(2+) as cofactor.

It catalyses the reaction (S)-dihydroorotate + H2O = N-carbamoyl-L-aspartate + H(+). It participates in pyrimidine metabolism; UMP biosynthesis via de novo pathway; (S)-dihydroorotate from bicarbonate: step 3/3. Functionally, catalyzes the reversible cyclization of carbamoyl aspartate to dihydroorotate. This is Dihydroorotase from Enterococcus faecalis (strain ATCC 700802 / V583).